The chain runs to 247 residues: Pyridoxine 5'-phosphate synthase (247 aa).

Asn12 provides a ligand contact to 3-amino-2-oxopropyl phosphate. 14-15 (DH) lines the 1-deoxy-D-xylulose 5-phosphate pocket. A 3-amino-2-oxopropyl phosphate-binding site is contributed by Arg23. The active-site Proton acceptor is the His48. The 1-deoxy-D-xylulose 5-phosphate site is built by Arg50 and His55. The Proton acceptor role is filled by Glu75. Thr105 is a 1-deoxy-D-xylulose 5-phosphate binding site. His196 acts as the Proton donor in catalysis. Residues Gly197 and 218–219 (GH) contribute to the 3-amino-2-oxopropyl phosphate site.

The protein belongs to the PNP synthase family. As to quaternary structure, homooctamer; tetramer of dimers.

The protein localises to the cytoplasm. The enzyme catalyses 3-amino-2-oxopropyl phosphate + 1-deoxy-D-xylulose 5-phosphate = pyridoxine 5'-phosphate + phosphate + 2 H2O + H(+). It functions in the pathway cofactor biosynthesis; pyridoxine 5'-phosphate biosynthesis; pyridoxine 5'-phosphate from D-erythrose 4-phosphate: step 5/5. Catalyzes the complicated ring closure reaction between the two acyclic compounds 1-deoxy-D-xylulose-5-phosphate (DXP) and 3-amino-2-oxopropyl phosphate (1-amino-acetone-3-phosphate or AAP) to form pyridoxine 5'-phosphate (PNP) and inorganic phosphate. The polypeptide is Pyridoxine 5'-phosphate synthase (Pseudomonas fluorescens (strain Pf0-1)).